A 238-amino-acid polypeptide reads, in one-letter code: Uridylate kinase (238 aa).

12–15 (KLSG) contributes to the ATP binding site. A UMP-binding site is contributed by Gly-54. ATP is bound by residues Gly-55 and Arg-59. UMP-binding positions include Asp-74 and 135-142 (TGNPFFTT). ATP-binding residues include Thr-162, Tyr-168, and Asp-171.

This sequence belongs to the UMP kinase family. Homohexamer.

Its subcellular location is the cytoplasm. It catalyses the reaction UMP + ATP = UDP + ADP. It functions in the pathway pyrimidine metabolism; CTP biosynthesis via de novo pathway; UDP from UMP (UMPK route): step 1/1. With respect to regulation, inhibited by UTP. In terms of biological role, catalyzes the reversible phosphorylation of UMP to UDP. The sequence is that of Uridylate kinase from Methylobacillus flagellatus (strain ATCC 51484 / DSM 6875 / VKM B-1610 / KT).